Here is a 290-residue protein sequence, read N- to C-terminus: Inositol-1-monophosphatase (290 aa).

Mg(2+) is bound by residues glutamate 83, aspartate 104, isoleucine 106, and aspartate 107. A substrate-binding site is contributed by glutamate 83. Residues 106 to 109 (IDGT), arginine 206, and aspartate 235 contribute to the substrate site. Residue aspartate 235 coordinates Mg(2+).

It belongs to the inositol monophosphatase superfamily. Requires Mg(2+) as cofactor.

It carries out the reaction a myo-inositol phosphate + H2O = myo-inositol + phosphate. This chain is Inositol-1-monophosphatase (suhB), found in Mycobacterium bovis (strain ATCC BAA-935 / AF2122/97).